We begin with the raw amino-acid sequence, 233 residues long: Large ribosomal subunit protein eL6y (233 aa).

The segment covering 48 to 72 (HDAKSKVDAPVEKPPKFYPAEDVKK) has biased composition (basic and acidic residues). A disordered region spans residues 48–82 (HDAKSKVDAPVEKPPKFYPAEDVKKPLPNRRTAKP).

Belongs to the eukaryotic ribosomal protein eL6 family.

The sequence is that of Large ribosomal subunit protein eL6y (RPL6B) from Arabidopsis thaliana (Mouse-ear cress).